Consider the following 63-residue polypeptide: Hyphancin-3E (63 aa).

Positions 1-22 are cleaved as a signal peptide; that stretch reads MNFSRILFFVFTCFVALASVSG. The propeptide at 23 to 26 is removed by a dipeptidylpeptidase; the sequence is APEP. L61 carries the post-translational modification Leucine amide.

The protein belongs to the cecropin family.

The protein localises to the secreted. Has antibacterial activity. The chain is Hyphancin-3E from Hyphantria cunea (Fall webworm moth).